Reading from the N-terminus, the 255-residue chain is Menaquinol:cytochrome c reductase cytochrome c subunit (255 aa).

3 helical membrane-spanning segments follow: residues 46–62 (WMVG…LTIV), 104–124 (VVGA…APFL), and 137–157 (VAVG…WQSV). In terms of domain architecture, Cytochrome c spans 178 to 253 (DTNAEGYKVF…ELAKFISETT (76 aa)). Residues cysteine 192, cysteine 195, and histidine 196 each coordinate heme c.

The protein belongs to the cytochrome b family. In terms of assembly, the main subunits of the menaquinol:cytochrome c complex are a Rieske-type iron-sulfur protein (QcrA), a cytochrome b (QcrB) and a cytochrome c (QcrC). Heme c is required as a cofactor.

The protein resides in the cell membrane. Functionally, component of the menaquinol:cytochrome c reductase complex. The sequence is that of Menaquinol:cytochrome c reductase cytochrome c subunit (qcrC) from Bacillus subtilis (strain 168).